We begin with the raw amino-acid sequence, 95 residues long: Co-chaperonin GroES (95 aa).

Belongs to the GroES chaperonin family. Heptamer of 7 subunits arranged in a ring. Interacts with the chaperonin GroEL.

The protein resides in the cytoplasm. Functionally, together with the chaperonin GroEL, plays an essential role in assisting protein folding. The GroEL-GroES system forms a nano-cage that allows encapsulation of the non-native substrate proteins and provides a physical environment optimized to promote and accelerate protein folding. GroES binds to the apical surface of the GroEL ring, thereby capping the opening of the GroEL channel. This is Co-chaperonin GroES from Rhizorhabdus wittichii (strain DSM 6014 / CCUG 31198 / JCM 15750 / NBRC 105917 / EY 4224 / RW1) (Sphingomonas wittichii).